The sequence spans 403 residues: Argininosuccinate synthase (403 aa).

Position 8–16 (8–16 (AYSGGLDTS)) interacts with ATP. Tyr-87 is an L-citrulline binding site. Gly-117 serves as a coordination point for ATP. L-aspartate-binding residues include Thr-119, Asn-123, and Asp-124. Asn-123 provides a ligand contact to L-citrulline. Residues Arg-127, Ser-175, Glu-259, and Tyr-271 each coordinate L-citrulline.

The protein belongs to the argininosuccinate synthase family. Type 1 subfamily. In terms of assembly, homotetramer.

Its subcellular location is the cytoplasm. It catalyses the reaction L-citrulline + L-aspartate + ATP = 2-(N(omega)-L-arginino)succinate + AMP + diphosphate + H(+). The protein operates within amino-acid biosynthesis; L-arginine biosynthesis; L-arginine from L-ornithine and carbamoyl phosphate: step 2/3. In Salinispora arenicola (strain CNS-205), this protein is Argininosuccinate synthase.